Reading from the N-terminus, the 402-residue chain is UDP-glucose 6-dehydrogenase (402 aa).

Residues 2 to 19, V11, D29, K34, T83, T118, and E145 contribute to the NAD(+) site; that span reads KIAV…GVLL. Substrate is bound by residues 141 to 145, K204, N208, 249 to 253, and G257; these read EFLRE and YNNPS. Y259 lines the NAD(+) pocket. C260 functions as the Nucleophile in the catalytic mechanism. K263 contributes to the NAD(+) binding site. K320 is a substrate binding site. R327 is a binding site for NAD(+).

It belongs to the UDP-glucose/GDP-mannose dehydrogenase family.

It catalyses the reaction UDP-alpha-D-glucose + 2 NAD(+) + H2O = UDP-alpha-D-glucuronate + 2 NADH + 3 H(+). The protein operates within nucleotide-sugar biosynthesis; UDP-alpha-D-glucuronate biosynthesis; UDP-alpha-D-glucuronate from UDP-alpha-D-glucose: step 1/1. Its function is as follows. Catalyzes the formation of UDP-glucuronic acid which is required for capsular hyaluronic acid synthesis. The chain is UDP-glucose 6-dehydrogenase (hasB) from Streptococcus pyogenes serotype M18 (strain MGAS8232).